A 78-amino-acid chain; its full sequence is Antitoxin FitA (78 aa).

Homodimer in the absence of FitB; forms a heterodimer with FitB; 4 FitAB heterodimers form a complex that binds to fitAB promoter DNA. The complex is also seen in solution.

Antitoxin component of a type II toxin-antitoxin (TA) system. Plays a role in the speed with which bacteria traverse human epithelial cells; disruption of the locus increases the speed of trafficking about 2-4-fold. Binds to its own promoter, binding affinity of the FitAB complex is 20-30-fold higher than FitA alone. No nuclease activity was observed for the FitAB complex, perhaps because FitA (the antitoxin) prevents metal binding and thus catalysis by FitB. In Neisseria gonorrhoeae (strain ATCC 700825 / FA 1090), this protein is Antitoxin FitA (fitA).